A 90-amino-acid polypeptide reads, in one-letter code: Probable Fe(2+)-trafficking protein (90 aa).

This sequence belongs to the Fe(2+)-trafficking protein family.

In terms of biological role, could be a mediator in iron transactions between iron acquisition and iron-requiring processes, such as synthesis and/or repair of Fe-S clusters in biosynthetic enzymes. The protein is Probable Fe(2+)-trafficking protein of Nitrosomonas europaea (strain ATCC 19718 / CIP 103999 / KCTC 2705 / NBRC 14298).